Here is a 432-residue protein sequence, read N- to C-terminus: Ornithine aminotransferase, mitochondrial (432 aa).

Position 287 is an N6-(pyridoxal phosphate)lysine (Lys-287).

It belongs to the class-III pyridoxal-phosphate-dependent aminotransferase family. As to quaternary structure, homotetramer. Pyridoxal 5'-phosphate serves as cofactor.

It is found in the mitochondrion matrix. It carries out the reaction a 2-oxocarboxylate + L-ornithine = L-glutamate 5-semialdehyde + an L-alpha-amino acid. Its pathway is amino-acid biosynthesis; L-proline biosynthesis; L-glutamate 5-semialdehyde from L-ornithine: step 1/1. This is Ornithine aminotransferase, mitochondrial (Oat) from Drosophila ananassae (Fruit fly).